The chain runs to 398 residues: Cathepsin E (398 aa).

A signal peptide spans 1–21 (MKPLFVLLLLLLLLDLAQAQG). Residues 22 to 58 (VLHRVPLRRHQSLRKKLRAQGQLSDFWRSHNLDMIEF) constitute a propeptide, activation peptide. Residues 80–394 (YFGTVSIGSP…DRGNNQVGLA (315 aa)) form the Peptidase A1 domain. An N-linked (GlcNAc...) asparagine glycan is attached at N92. D98 is an active-site residue. Cystine bridges form between C111–C116 and C274–C278. Residue D283 is part of the active site.

The protein belongs to the peptidase A1 family. Homodimer; disulfide-linked. Glycosylated. The nature of the carbohydrate chain varies between cell types. In brain microglia, the proenzyme contains a high mannose-type oligosaccharide, while the mature enzyme contains a complex-type oligosaccharide. In stomach and spleen, the mature enzyme contains a high mannose-type oligosaccharide. In erythrocyte membranes, the mature enzyme contains a complex-type oligosaccharide. As to expression, expressed abundantly in lymphocytes and macrophages of the thymus and spleen, and in the M cells of the intestine. In the brain, expression is limited to reactive microglial cells, the large pyrimidial neurons in the cerebral cortex, the CA1 and CA3 pyrimidial neurons of the hippocampus, the large neurons of the neostriatum, and the Purkinje neurons of the cerebellum.

It localises to the endosome. The catalysed reaction is Similar to cathepsin D, but slightly broader specificity.. May have a role in immune function. Probably involved in the processing of antigenic peptides during MHC class II-mediated antigen presentation. May play a role in activation-induced lymphocyte depletion in the thymus, and in neuronal degeneration and glial cell activation in the brain. The chain is Cathepsin E (Ctse) from Rattus norvegicus (Rat).